A 228-amino-acid chain; its full sequence is 2,3-bisphosphoglycerate-dependent phosphoglycerate mutase (228 aa).

Residues 8-15 (RHGQSQWN), 21-22 (TG), R60, 87-90 (ERHY), K98, 114-115 (RR), and 180-181 (GN) contribute to the substrate site. The active-site Tele-phosphohistidine intermediate is the H9. Catalysis depends on E87, which acts as the Proton donor/acceptor.

Belongs to the phosphoglycerate mutase family. BPG-dependent PGAM subfamily. Homodimer.

The enzyme catalyses (2R)-2-phosphoglycerate = (2R)-3-phosphoglycerate. It participates in carbohydrate degradation; glycolysis; pyruvate from D-glyceraldehyde 3-phosphate: step 3/5. Catalyzes the interconversion of 2-phosphoglycerate and 3-phosphoglycerate. The sequence is that of 2,3-bisphosphoglycerate-dependent phosphoglycerate mutase from Sphingopyxis alaskensis (strain DSM 13593 / LMG 18877 / RB2256) (Sphingomonas alaskensis).